Here is a 464-residue protein sequence, read N- to C-terminus: UPF0210 protein Cgl1545/cg1743 (464 aa).

This sequence belongs to the UPF0210 family. Homodimer.

The chain is UPF0210 protein Cgl1545/cg1743 from Corynebacterium glutamicum (strain ATCC 13032 / DSM 20300 / JCM 1318 / BCRC 11384 / CCUG 27702 / LMG 3730 / NBRC 12168 / NCIMB 10025 / NRRL B-2784 / 534).